The sequence spans 165 residues: UI (165 aa).

The N-terminal stretch at 1-18 is a signal peptide; the sequence is MKPVPLILLLATVLLSSH. A Valine amide modification is found at Val-163.

This sequence belongs to the sauvagine/corticotropin-releasing factor/urotensin I family.

It localises to the secreted. Urotensin is found in the teleost caudal neurosecretory system. It has a suggested role in osmoregulation and as a corticotropin-releasing factor. The non-hormonal portion of this precursor may be a urotensin binding protein, urophysin. The sequence is that of UI from Oncorhynchus mykiss (Rainbow trout).